The sequence spans 63 residues: Large ribosomal subunit protein uL29 (63 aa).

Belongs to the universal ribosomal protein uL29 family.

This Listeria innocua serovar 6a (strain ATCC BAA-680 / CLIP 11262) protein is Large ribosomal subunit protein uL29.